Reading from the N-terminus, the 258-residue chain is Aspartate/glutamate leucyltransferase (258 aa).

The protein belongs to the R-transferase family. Bpt subfamily.

Its subcellular location is the cytoplasm. It catalyses the reaction N-terminal L-glutamyl-[protein] + L-leucyl-tRNA(Leu) = N-terminal L-leucyl-L-glutamyl-[protein] + tRNA(Leu) + H(+). It carries out the reaction N-terminal L-aspartyl-[protein] + L-leucyl-tRNA(Leu) = N-terminal L-leucyl-L-aspartyl-[protein] + tRNA(Leu) + H(+). Functionally, functions in the N-end rule pathway of protein degradation where it conjugates Leu from its aminoacyl-tRNA to the N-termini of proteins containing an N-terminal aspartate or glutamate. The polypeptide is Aspartate/glutamate leucyltransferase (Rhodopseudomonas palustris (strain BisA53)).